The primary structure comprises 428 residues: Histidinol dehydrogenase (428 aa).

NAD(+)-binding residues include tyrosine 124, glutamine 186, and asparagine 209. Serine 233, glutamine 255, and histidine 258 together coordinate substrate. Zn(2+) contacts are provided by glutamine 255 and histidine 258. Catalysis depends on proton acceptor residues glutamate 322 and histidine 323. Residues histidine 323, aspartate 356, glutamate 410, and histidine 415 each contribute to the substrate site. A Zn(2+)-binding site is contributed by aspartate 356. Histidine 415 contacts Zn(2+).

The protein belongs to the histidinol dehydrogenase family. It depends on Zn(2+) as a cofactor.

The catalysed reaction is L-histidinol + 2 NAD(+) + H2O = L-histidine + 2 NADH + 3 H(+). It participates in amino-acid biosynthesis; L-histidine biosynthesis; L-histidine from 5-phospho-alpha-D-ribose 1-diphosphate: step 9/9. In terms of biological role, catalyzes the sequential NAD-dependent oxidations of L-histidinol to L-histidinaldehyde and then to L-histidine. This chain is Histidinol dehydrogenase, found in Bacteroides fragilis (strain ATCC 25285 / DSM 2151 / CCUG 4856 / JCM 11019 / LMG 10263 / NCTC 9343 / Onslow / VPI 2553 / EN-2).